Reading from the N-terminus, the 176-residue chain is Large ribosomal subunit protein bL12m (176 aa).

The protein belongs to the bacterial ribosomal protein bL12 family. As to quaternary structure, component of the mitochondrial large ribosomal subunit (mt-LSU). Mature N.crassa 74S mitochondrial ribosomes consist of a small (37S) and a large (54S) subunit. The 37S small subunit contains a 16S ribosomal RNA (16S mt-rRNA) and 32 different proteins. The 54S large subunit contains a 23S rRNA (23S mt-rRNA) and 42 different proteins.

Its subcellular location is the mitochondrion. In terms of biological role, component of the mitochondrial ribosome (mitoribosome), a dedicated translation machinery responsible for the synthesis of mitochondrial genome-encoded proteins, including at least some of the essential transmembrane subunits of the mitochondrial respiratory chain. The mitoribosomes are attached to the mitochondrial inner membrane and translation products are cotranslationally integrated into the membrane. The chain is Large ribosomal subunit protein bL12m (mrpl12) from Neurospora crassa (strain ATCC 24698 / 74-OR23-1A / CBS 708.71 / DSM 1257 / FGSC 987).